A 450-amino-acid polypeptide reads, in one-letter code: UPF0210 protein MK1214 (450 aa).

Belongs to the UPF0210 family.

The chain is UPF0210 protein MK1214 from Methanopyrus kandleri (strain AV19 / DSM 6324 / JCM 9639 / NBRC 100938).